We begin with the raw amino-acid sequence, 565 residues long: MSEALERFIDQGIGRKPADIVLKGGRFFDLVTGELVASDIAISGDRIVGTCGDYEGREEIDVSGRIVVPGFIDTHLHIESSLVTPHEFDRCVLPLGITTAICDPHEIANVLGTEGIQFFLDSAMETIMDIRVQLSSCVPATHLETAGADLPIERLTPFRHHPKVIGLAEFMNFPGVIHKDPICLAKLDAFQGGHIDGHAPLLRGKELNGYLATGIRTDHECTSAEEALEKIRKGMHILVREGSVSKDLQALMPIITERLSPHLALCTDDRNPLDIAEQGHLDHMIRTAIAAGVEPLAIYRAASISAARAFGLSDRGLVAPGWRADLVVLDSLENCKAEMVFSGGRRVTDALFARRKPVEPVGLDSVKAREVKAADFGVPYSEVETSVIGVLPGKIITEHRRYRLPAVGNQTGPDLGRDIIKVAVIERHGVNGNHANGFVQGFGLKKGAIASTVGHDSHNICVVGVSEEDMALAANRLGAIKGGFVVVEDGRVTGEIALPIAGLMSLEPYERVRDILHHLRQAAFALGATLEEPFLQLAFLPLPVIPHLKISDRGLVDVDKFALIG.

The protein belongs to the metallo-dependent hydrolases superfamily. Adenine deaminase family. Requires Mn(2+) as cofactor.

It carries out the reaction adenine + H2O + H(+) = hypoxanthine + NH4(+). The protein is Adenine deaminase of Sinorhizobium fredii (strain NBRC 101917 / NGR234).